The chain runs to 425 residues: Probable threonylcarbamoyladenosine tRNA methylthiotransferase (425 aa).

An MTTase N-terminal domain is found at 2-110; sequence VKIYIENYGC…IIQAVEYALR (109 aa). [4Fe-4S] cluster is bound by residues Cys-11, Cys-47, Cys-76, Cys-148, Cys-152, and Cys-155. The 231-residue stretch at 133-363 folds into the Radical SAM core domain; sequence LSPRTVYFIV…HRIRLQISYE (231 aa). In terms of domain architecture, TRAM spans 366–425; sequence QKYIGKKVEVLIHGEGKKGNVDAVTMNYKHVILPFGNSGEFRIAEIKNATSTYLLGEVMS.

Belongs to the methylthiotransferase family. CDKAL1 subfamily. The cofactor is [4Fe-4S] cluster.

The enzyme catalyses N(6)-L-threonylcarbamoyladenosine(37) in tRNA + (sulfur carrier)-SH + AH2 + 2 S-adenosyl-L-methionine = 2-methylsulfanyl-N(6)-L-threonylcarbamoyladenosine(37) in tRNA + (sulfur carrier)-H + 5'-deoxyadenosine + L-methionine + A + S-adenosyl-L-homocysteine + 2 H(+). Catalyzes the methylthiolation of N6-threonylcarbamoyladenosine (t(6)A), leading to the formation of 2-methylthio-N6-threonylcarbamoyladenosine (ms(2)t(6)A) at position 37 in tRNAs that read codons beginning with adenine. The protein is Probable threonylcarbamoyladenosine tRNA methylthiotransferase of Pyrococcus abyssi (strain GE5 / Orsay).